The chain runs to 543 residues: Pectate disaccharide-lyase (543 aa).

Belongs to the polysaccharide lyase 2 family. Cu cation serves as cofactor. It depends on Mn(2+) as a cofactor. Ni(2+) is required as a cofactor.

The protein resides in the cytoplasm. The enzyme catalyses [(1-&gt;4)-alpha-D-galacturonosyl](n) = 4-(4-deoxy-alpha-D-galact-4-enuronosyl)-D-galacturonate + [(1-&gt;4)-alpha-D-galacturonosyl](n-2). Its pathway is glycan metabolism; pectin degradation. Catalyzes the formation of unsaturated digalacturonates from polygalacturonate or short oligogalacturonates. The chain is Pectate disaccharide-lyase (pelW) from Dickeya dadantii (strain 3937) (Erwinia chrysanthemi (strain 3937)).